Here is a 130-residue protein sequence, read N- to C-terminus: Small ribosomal subunit protein uS11 (130 aa).

It belongs to the universal ribosomal protein uS11 family. Part of the 30S ribosomal subunit. Interacts with proteins S7 and S18. Binds to IF-3.

Functionally, located on the platform of the 30S subunit, it bridges several disparate RNA helices of the 16S rRNA. Forms part of the Shine-Dalgarno cleft in the 70S ribosome. This chain is Small ribosomal subunit protein uS11, found in Helicobacter hepaticus (strain ATCC 51449 / 3B1).